The chain runs to 166 residues: Small ribosomal subunit protein uS5 (166 aa).

In terms of domain architecture, S5 DRBM spans L11–V74.

Belongs to the universal ribosomal protein uS5 family. Part of the 30S ribosomal subunit. Contacts proteins S4 and S8.

In terms of biological role, with S4 and S12 plays an important role in translational accuracy. Functionally, located at the back of the 30S subunit body where it stabilizes the conformation of the head with respect to the body. The polypeptide is Small ribosomal subunit protein uS5 (Ligilactobacillus salivarius (strain UCC118) (Lactobacillus salivarius)).